A 275-amino-acid chain; its full sequence is Large ribosomal subunit protein uL2 (275 aa).

The tract at residues 216 to 275 (GIRPQTRGSAMNPIDHPHGGGEGKTNSGRHPVTPWGMPTKGYKTRKKKASDKLIISKRKK) is disordered. Positions 257–275 (YKTRKKKASDKLIISKRKK) are enriched in basic residues.

It belongs to the universal ribosomal protein uL2 family. As to quaternary structure, part of the 50S ribosomal subunit. Forms a bridge to the 30S subunit in the 70S ribosome.

One of the primary rRNA binding proteins. Required for association of the 30S and 50S subunits to form the 70S ribosome, for tRNA binding and peptide bond formation. It has been suggested to have peptidyltransferase activity; this is somewhat controversial. Makes several contacts with the 16S rRNA in the 70S ribosome. The polypeptide is Large ribosomal subunit protein uL2 (Aliarcobacter butzleri (strain RM4018) (Arcobacter butzleri)).